Here is a 196-residue protein sequence, read N- to C-terminus: ATP-dependent Clp protease proteolytic subunit (196 aa).

The active-site Nucleophile is S96. The active site involves H121.

It belongs to the peptidase S14 family. As to quaternary structure, fourteen ClpP subunits assemble into 2 heptameric rings which stack back to back to give a disk-like structure with a central cavity, resembling the structure of eukaryotic proteasomes.

Its subcellular location is the cytoplasm. It carries out the reaction Hydrolysis of proteins to small peptides in the presence of ATP and magnesium. alpha-casein is the usual test substrate. In the absence of ATP, only oligopeptides shorter than five residues are hydrolyzed (such as succinyl-Leu-Tyr-|-NHMec, and Leu-Tyr-Leu-|-Tyr-Trp, in which cleavage of the -Tyr-|-Leu- and -Tyr-|-Trp bonds also occurs).. Cleaves peptides in various proteins in a process that requires ATP hydrolysis. Has a chymotrypsin-like activity. Plays a major role in the degradation of misfolded proteins. The polypeptide is ATP-dependent Clp protease proteolytic subunit (Streptococcus pyogenes serotype M3 (strain SSI-1)).